The primary structure comprises 305 residues: tRNA dimethylallyltransferase (305 aa).

8 to 15 is a binding site for ATP; that stretch reads GPTASGKT. Residue 10 to 15 coordinates substrate; sequence TASGKT. The interval 33 to 36 is interaction with substrate tRNA; the sequence is DSQQ.

The protein belongs to the IPP transferase family. In terms of assembly, monomer. It depends on Mg(2+) as a cofactor.

It carries out the reaction adenosine(37) in tRNA + dimethylallyl diphosphate = N(6)-dimethylallyladenosine(37) in tRNA + diphosphate. Functionally, catalyzes the transfer of a dimethylallyl group onto the adenine at position 37 in tRNAs that read codons beginning with uridine, leading to the formation of N6-(dimethylallyl)adenosine (i(6)A). The polypeptide is tRNA dimethylallyltransferase (Anaeromyxobacter sp. (strain K)).